Here is a 183-residue protein sequence, read N- to C-terminus: Threonylcarbamoyl-AMP synthase (183 aa).

Residues 1 to 183 (MNITQIIEKL…LFTNQLVRQG (183 aa)) enclose the YrdC-like domain.

This sequence belongs to the SUA5 family. TsaC subfamily.

It localises to the cytoplasm. It carries out the reaction L-threonine + hydrogencarbonate + ATP = L-threonylcarbamoyladenylate + diphosphate + H2O. In terms of biological role, required for the formation of a threonylcarbamoyl group on adenosine at position 37 (t(6)A37) in tRNAs that read codons beginning with adenine. Catalyzes the conversion of L-threonine, HCO(3)(-)/CO(2) and ATP to give threonylcarbamoyl-AMP (TC-AMP) as the acyladenylate intermediate, with the release of diphosphate. The chain is Threonylcarbamoyl-AMP synthase from Histophilus somni (strain 2336) (Haemophilus somnus).